A 269-amino-acid polypeptide reads, in one-letter code: Growth-regulating factor 11 (269 aa).

Positions 1–11 are enriched in basic and acidic residues; that stretch reads MAAEGEAKKDS. Residues 1–71 form a disordered region; the sequence is MAAEGEAKKD…GKEDVEEGGV (71 aa). Residues 43-52 are compositionally biased toward gly residues; that stretch reads GEAGGGGGGG. Acidic residues predominate over residues 58–68; it reads EEEEGKEDVEE. In terms of domain architecture, QLQ spans 114 to 149; the sequence is AFTAMQLQELEQQSRVYQYMAARVPVPTHLVFPIWK. One can recognise a WRC domain in the interval 180-224; the sequence is EPEPGRCRRTDGKKWRCWRNAIANEKYCERHMHRGRKRPVQLVVE. 2 consecutive short sequence motifs (bipartite nuclear localization signal) follow at residues 185 to 195 and 213 to 217; these read RCRRTDGKKWR and RGRKR. The tract at residues 212-269 is disordered; the sequence is HRGRKRPVQLVVEDDEPDSTSGSKPASGKATEGGKKTDDKSSSSKKLAVAAPAAVEST. A compositionally biased stretch (basic and acidic residues) spans 243-253; it reads EGGKKTDDKSS. Positions 255-269 are enriched in low complexity; the sequence is SKKLAVAAPAAVEST.

The protein belongs to the GRF family.

The protein localises to the nucleus. Functionally, transcription activator that plays a regulatory role in gibberellin-induced stem elongation. In Oryza sativa subsp. japonica (Rice), this protein is Growth-regulating factor 11 (GRF11).